The following is a 182-amino-acid chain: Kappa-casein (182 aa).

The first 20 residues, 1 to 20, serve as a signal peptide directing secretion; that stretch reads MKSFLLVVNALALTLPFLAV. O-linked (GalNAc...) threonine glycosylation is found at Thr133, Thr143, Thr148, and Thr151. Thr157 carries the phosphothreonine; alternate modification. A glycan (O-linked (GalNAc...) threonine; alternate) is linked at Thr157. 3 O-linked (GalNAc...) threonine glycosylation sites follow: Thr167, Thr169, and Thr178.

Belongs to the kappa-casein family. Heteromultimers composed of alpha-s1 casein and kappa casein linked by disulfide bonds. Post-translationally, the N-terminus is blocked. In terms of tissue distribution, mammary gland specific. Secreted in milk.

It is found in the secreted. Kappa-casein stabilizes micelle formation, preventing casein precipitation in milk. The chain is Kappa-casein (CSN3) from Homo sapiens (Human).